We begin with the raw amino-acid sequence, 182 residues long: Putative adenylate kinase (182 aa).

Residues Gly-10, Gly-12, Lys-13, Thr-14, and Ser-15 each coordinate ATP. The segment at 30–53 (HLNEMIKEEHLYTEVDEVRDAVIA) is NMP. The LID stretch occupies residues 104–114 (ARGYSEEKIRE). 2 residues coordinate ATP: Arg-105 and Lys-143.

Belongs to the adenylate kinase family. AK6 subfamily. As to quaternary structure, interacts with uS11. Not a structural component of 40S pre-ribosomes, but transiently interacts with them by binding to uS11.

The catalysed reaction is AMP + ATP = 2 ADP. It carries out the reaction ATP + H2O = ADP + phosphate + H(+). Its function is as follows. Broad-specificity nucleoside monophosphate (NMP) kinase that catalyzes the reversible transfer of the terminal phosphate group between nucleoside triphosphates and monophosphates. Also has ATPase activity. Involved in the late maturation steps of the 30S ribosomal particles, specifically 16S rRNA maturation. While NMP activity is not required for ribosome maturation, ATPase activity is. Associates transiently with small ribosomal subunit protein uS11. ATP hydrolysis breaks the interaction with uS11. May temporarily remove uS11 from the ribosome to enable a conformational change of the ribosomal RNA that is needed for the final maturation step of the small ribosomal subunit. The protein is Putative adenylate kinase of Methanosarcina barkeri (strain Fusaro / DSM 804).